Consider the following 465-residue polypeptide: Cysteine--tRNA ligase (465 aa).

Cysteine 27 is a Zn(2+) binding site. Positions 29 to 39 (PTTYNYIHIGN) match the 'HIGH' region motif. Zn(2+) contacts are provided by cysteine 207, histidine 232, and glutamate 236. Residues 264 to 268 (KMSKS) carry the 'KMSKS' region motif. Lysine 267 contacts ATP.

Belongs to the class-I aminoacyl-tRNA synthetase family. As to quaternary structure, monomer. Zn(2+) serves as cofactor.

The protein resides in the cytoplasm. The catalysed reaction is tRNA(Cys) + L-cysteine + ATP = L-cysteinyl-tRNA(Cys) + AMP + diphosphate. In Carboxydothermus hydrogenoformans (strain ATCC BAA-161 / DSM 6008 / Z-2901), this protein is Cysteine--tRNA ligase.